The sequence spans 158 residues: Ribosome maturation factor RimP (158 aa).

It belongs to the RimP family.

It is found in the cytoplasm. Required for maturation of 30S ribosomal subunits. The sequence is that of Ribosome maturation factor RimP from Pseudomonas putida (strain ATCC 47054 / DSM 6125 / CFBP 8728 / NCIMB 11950 / KT2440).